We begin with the raw amino-acid sequence, 673 residues long: DNA ligase (673 aa).

Residues 38–42 (DSVYD), 87–88 (SL), and E119 contribute to the NAD(+) site. K121 functions as the N6-AMP-lysine intermediate in the catalytic mechanism. R142, E179, K296, and K320 together coordinate NAD(+). Zn(2+) contacts are provided by C414, C417, C432, and C438. Residues 595-673 (VVKSEIAGKT…EEAFLKLLKS (79 aa)) enclose the BRCT domain.

It belongs to the NAD-dependent DNA ligase family. LigA subfamily. Mg(2+) serves as cofactor. The cofactor is Mn(2+).

The catalysed reaction is NAD(+) + (deoxyribonucleotide)n-3'-hydroxyl + 5'-phospho-(deoxyribonucleotide)m = (deoxyribonucleotide)n+m + AMP + beta-nicotinamide D-nucleotide.. Its function is as follows. DNA ligase that catalyzes the formation of phosphodiester linkages between 5'-phosphoryl and 3'-hydroxyl groups in double-stranded DNA using NAD as a coenzyme and as the energy source for the reaction. It is essential for DNA replication and repair of damaged DNA. This Coxiella burnetii (strain RSA 493 / Nine Mile phase I) protein is DNA ligase.